The chain runs to 153 residues: Aspartate carbamoyltransferase regulatory chain (153 aa).

Zn(2+)-binding residues include cysteine 109, cysteine 114, cysteine 138, and cysteine 141.

The protein belongs to the PyrI family. As to quaternary structure, contains catalytic and regulatory chains. The cofactor is Zn(2+).

Involved in allosteric regulation of aspartate carbamoyltransferase. In Vibrio vulnificus (strain CMCP6), this protein is Aspartate carbamoyltransferase regulatory chain.